Consider the following 679-residue polypeptide: Stress-70 protein, mitochondrial (679 aa).

A mitochondrion-targeting transit peptide spans Met1–Tyr46. An interaction with NFS1 region spans residues Met1–Val432. ADP is bound by residues Thr63 and Asn64. Residues Thr63–Asp431 are nucleotide-binding domain (NBD). Lys76 bears the N6-acetyllysine mark. The residue at position 87 (Thr87) is a Phosphothreonine. 2 positions are modified to N6-acetyllysine; alternate: Lys135 and Lys138. 2 positions are modified to N6-succinyllysine; alternate: Lys135 and Lys138. At Lys143 the chain carries N6-acetyllysine. N6-acetyllysine; alternate is present on Lys206. Lys206 bears the N6-succinyllysine; alternate mark. Lys206 is subject to N6-malonyllysine; alternate. N6-acetyllysine occurs at positions 234 and 288. Lys300 is modified (N6-acetyllysine; alternate). Lys300 carries the post-translational modification N6-succinyllysine; alternate. Residues Glu313, Lys316, and Ser320 each contribute to the ADP site. N6-succinyllysine is present on Lys368. ADP is bound by residues Gly388 and Arg391. Lys394 bears the N6-succinyllysine mark. At Ser408 the chain carries Phosphoserine. Residues Val432–Thr441 form an interdomain linker region. Residues Val432–Gln679 are interaction with FXN and ISCU. Residues Pro442–Gln679 form a substrate-binding domain (SBD) region. At Arg513 the chain carries Omega-N-methylarginine. Lys567 and Lys600 each carry N6-acetyllysine; alternate. 2 positions are modified to N6-succinyllysine; alternate: Lys567 and Lys600. N6-succinyllysine is present on Lys610. At Lys612 the chain carries N6-acetyllysine. At Lys646 the chain carries N6-acetyllysine; alternate. Lys646 carries the post-translational modification N6-succinyllysine; alternate. Positions Ala656–Gln679 are disordered. A compositionally biased stretch (basic and acidic residues) spans Glu669–Gln679.

Belongs to the heat shock protein 70 family. As to quaternary structure, interacts strongly with the intermediate form of FXN and weakly with its mature form. Interacts with HSCB. Associates with the mitochondrial contact site and cristae organizing system (MICOS) complex, composed of at least MICOS10/MIC10, CHCHD3/MIC19, CHCHD6/MIC25, APOOL/MIC27, IMMT/MIC60, APOO/MIC23/MIC26 and QIL1/MIC13. This complex was also known under the names MINOS or MitOS complex. The MICOS complex associates with mitochondrial outer membrane proteins SAMM50, MTX1, MTX2 and DNAJC11, mitochondrial inner membrane protein TMEM11 and with HSPA9. Interacts with DNLZ, the interaction is required to prevent self-aggregation. Interacts with TESPA1. Interacts with PDPN. Interacts with NFU1, NFS1 and ISCU. Interacts with TP53; the interaction promotes TP53 degradation. Interacts (via SBD domain) with UBXN2A; the interaction with UBXN2A inhibits HSPA9/MOT-2 interaction with and degradation of TP53, thereby promotes TP53 translocation to the nucleus. Interacts with ITPR1 AND VDAC1; this interaction couples ITPR1 to VDAC1. Component of the TIM23 mitochondrial inner membrane pre-sequence translocase complex.

The protein localises to the mitochondrion. It localises to the nucleus. Its subcellular location is the nucleolus. The protein resides in the cytoplasm. It is found in the mitochondrion matrix. It carries out the reaction ATP + H2O = ADP + phosphate + H(+). The chaperone activity is regulated by ATP-induced allosteric coupling of the nucleotide-binding (NBD) and substrate-binding (SBD) domains. ATP binding in the NBD leads to a conformational change in the NBD, which is transferred through the interdomain linker (IDL) to the substrate-binding domain (SBD). This elicits a reduced substrate affinity and a faster substrate exchange rate. Upon hydrolysis of ATP to ADP, the protein undergoes a conformational change that increases its affinity for substrate proteins. It cycles through repeated phases of ATP hydrolysis and nucleotide exchange, facilitating repeated cycles of substrate binding and release. Functions in collaboration with co-chaperones. Functions with the co-chaperone, DNLZ, to maintain solubility and regulate ATP hydrolysis. Nucleotide exchange factors, GRPEL1 and GRPEL2, accelerate nucleotide exchange. Functionally, mitochondrial chaperone that plays a key role in mitochondrial protein import, folding, and assembly. Plays an essential role in the protein quality control system, the correct folding of proteins, the re-folding of misfolded proteins, and the targeting of proteins for subsequent degradation. These processes are achieved through cycles of ATP binding, ATP hydrolysis, and ADP release, mediated by co-chaperones. In mitochondria, it associates with the TIM (translocase of the inner membrane) protein complex to assist in the import and folding of mitochondrial proteins. Plays an important role in mitochondrial iron-sulfur cluster (ISC) biogenesis, interacts with and stabilizes ISC cluster assembly proteins FXN, NFU1, NFS1 and ISCU. Regulates erythropoiesis via stabilization of ISC assembly. Regulates mitochondrial calcium-dependent apoptosis by coupling two calcium channels, ITPR1 and VDAC1, at the mitochondria-associated endoplasmic reticulum (ER) membrane to facilitate calcium transport from the ER lumen to the mitochondria intermembrane space, providing calcium for the downstream calcium channel MCU, which releases it into the mitochondrial matrix. Although primarily located in the mitochondria, it is also found in other cellular compartments. In the cytosol, it associates with proteins involved in signaling, apoptosis, or senescence. It may play a role in cell cycle regulation via its interaction with and promotion of degradation of TP53. May play a role in the control of cell proliferation and cellular aging. Protects against reactive oxygen species (ROS). Extracellular HSPA9 plays a cytoprotective role by preventing cell lysis following immune attack by the membrane attack complex by disrupting formation of the complex. The polypeptide is Stress-70 protein, mitochondrial (Bos taurus (Bovine)).